Consider the following 190-residue polypeptide: Small ribosomal subunit protein uS5 (190 aa).

An S5 DRBM domain is found at 22–85 (FVDKLVHINR…DSAKRNLTRV (64 aa)).

The protein belongs to the universal ribosomal protein uS5 family. Part of the 30S ribosomal subunit. Contacts proteins S4 and S8.

Its function is as follows. With S4 and S12 plays an important role in translational accuracy. Located at the back of the 30S subunit body where it stabilizes the conformation of the head with respect to the body. The chain is Small ribosomal subunit protein uS5 from Bradyrhizobium sp. (strain BTAi1 / ATCC BAA-1182).